The following is a 113-amino-acid chain: MAKNKFPGLGGGFNINQLQKQARKMQEEIEKLQEELNQREIEVSSGGGAVKVVINGKKEIKSIQILPEVVDPEDVETLQDLIVACVNEAIRKVDKMVEEEMQKVTGFGIPGLF.

This sequence belongs to the YbaB/EbfC family. As to quaternary structure, homodimer.

The protein resides in the cytoplasm. It localises to the nucleoid. In terms of biological role, binds to DNA and alters its conformation. May be involved in regulation of gene expression, nucleoid organization and DNA protection. In Caldicellulosiruptor bescii (strain ATCC BAA-1888 / DSM 6725 / KCTC 15123 / Z-1320) (Anaerocellum thermophilum), this protein is Nucleoid-associated protein Athe_1143.